A 266-amino-acid polypeptide reads, in one-letter code: ATP synthase subunit a (266 aa).

5 consecutive transmembrane segments (helical) span residues 28–48, 88–108, 141–161, 206–226, and 237–257; these read SINVDSMFFSIALGILFLVIF, LIAPLALTIFVWVFLMNMMDL, DVNITLSMALGVFILVLFYSI, LFGNMYAGELIFILIAGLLPW, and AIFHILIITLQAFIFMVLTVV.

Belongs to the ATPase A chain family. As to quaternary structure, F-type ATPases have 2 components, CF(1) - the catalytic core - and CF(0) - the membrane proton channel. CF(1) has five subunits: alpha(3), beta(3), gamma(1), delta(1), epsilon(1). CF(0) has three main subunits: a(1), b(2) and c(9-12). The alpha and beta chains form an alternating ring which encloses part of the gamma chain. CF(1) is attached to CF(0) by a central stalk formed by the gamma and epsilon chains, while a peripheral stalk is formed by the delta and b chains.

It localises to the cell inner membrane. Its function is as follows. Key component of the proton channel; it plays a direct role in the translocation of protons across the membrane. In Pectobacterium atrosepticum (strain SCRI 1043 / ATCC BAA-672) (Erwinia carotovora subsp. atroseptica), this protein is ATP synthase subunit a.